The chain runs to 237 residues: Protein-S-isoprenylcysteine O-methyltransferase (237 aa).

The next 4 membrane-spanning stretches (helical) occupy residues 26 to 46 (SSAISCGLGIGIGFGIALFIF), 53 to 73 (FGIYLAGLCTFHMWEYIWVTM), 92 to 112 (FNMALLISFIEFWIEWYFFPS), and 116 to 136 (FSLWWVGAICMVFGQIVRSVA). Residues Gln-149, 156 to 159 (HVLV), Tyr-164, and 169 to 172 (HPSY) each bind S-adenosyl-L-methionine. Residues 184–204 (VILMNPISIIGFGWASWSFFS) traverse the membrane as a helical segment. A substrate-binding site is contributed by Arg-206. Residue Glu-210 participates in S-adenosyl-L-methionine binding.

The protein belongs to the class VI-like SAM-binding methyltransferase superfamily. Isoprenylcysteine carboxyl methyltransferase family.

The protein resides in the endoplasmic reticulum membrane. The enzyme catalyses [protein]-C-terminal S-[(2E,6E)-farnesyl]-L-cysteine + S-adenosyl-L-methionine = [protein]-C-terminal S-[(2E,6E)-farnesyl]-L-cysteine methyl ester + S-adenosyl-L-homocysteine. Functionally, methylates the C-terminal cysteine residues of small GTPases and the heterotrimeric G protein gamma subunit in response to cAMP. The methylation is required for intercellular signaling and regulation of cAMP waves propagation. It also seems to induce the activity of car1, a G protein-coupled receptor which senses extracellular cAMP during the aggregation phase of development. In Dictyostelium discoideum (Social amoeba), this protein is Protein-S-isoprenylcysteine O-methyltransferase (icmt-1).